A 142-amino-acid polypeptide reads, in one-letter code: Large ribosomal subunit protein uL13 (142 aa).

The protein belongs to the universal ribosomal protein uL13 family. As to quaternary structure, part of the 50S ribosomal subunit.

This protein is one of the early assembly proteins of the 50S ribosomal subunit, although it is not seen to bind rRNA by itself. It is important during the early stages of 50S assembly. The sequence is that of Large ribosomal subunit protein uL13 from Alkalilimnicola ehrlichii (strain ATCC BAA-1101 / DSM 17681 / MLHE-1).